Consider the following 146-residue polypeptide: Protein E6 (146 aa).

Zinc fingers lie at residues 27-63 (CVFCKNELTTEELLAFALKELSIVWRHNWPFGVCAPC) and 100-136 (CHACSKPLSIQEKEHQVQAYIHFHYIAGQWTGRCCQC).

The protein belongs to the papillomaviridae E6 protein family. Forms homodimers. Interacts with ubiquitin-protein ligase UBE3A/E6-AP; this interaction stimulates UBE3A ubiquitin activity. Interacts with host TP53 and EP300; this interaction inhibits TP53 activity.

The protein localises to the host cytoplasm. Its subcellular location is the host nucleus. Functionally, plays a major role in the induction and maintenance of cellular transformation. E6 associates with host UBE3A/E6-AP ubiquitin-protein ligase and modulates its activity. Sequesters tumor suppressor TP53 in the host cytoplasm and modulates its activity by interacting with host EP300 that results in the reduction of TP53 acetylation and activation. In turn, apoptosis induced by DNA damage is inhibited. E6 also protects host keratinocytes from apoptosis by mediating the degradation of host BAK1. May also inhibit host immune response. The polypeptide is Protein E6 (Human papillomavirus type 61).